We begin with the raw amino-acid sequence, 466 residues long: MIPVTSFAGKTVAVFGLGGSGLASCHALKAGGAEVIAGDDNADNLAKVAQAGFITADLRNVSWVNFAALVLAPGVPLTHPKPHWSVLAARQAGVEVIGDIELFCRERARHAPDAPFVAITGTNGKSTTTALVAHLMREAGHDVQMGGNIGTAILSLEPPRKGRVHVIEMSSYQIDLTPSLDPTVGILLNVSPDHLDRHGTIEHYAAVKERLIAAVQPHGTAVVGVDDIWSRTAADRIEQAGKRVVRVSVKRPLADGISVDHDRIVRASGGAQAEIADIGGIGSLRGRHNAQNAACASAAALALGVGRDILQQDLRSFPGLAHRMEQVGRKANVLFVNDSKGTNADATEKALSSFAEIFWIAGGKPKSGGIAPLAELFPRIRKAYLIGEAAEEFAGTLEGRVVYEISGTLEAAVPAAARDAEGSGLADAVVLLSPACASFDQFRNFEARGDRFRELVRALPGVTPVA.

Residue 121 to 127 coordinates ATP; it reads GTNGKST.

It belongs to the MurCDEF family.

It is found in the cytoplasm. It catalyses the reaction UDP-N-acetyl-alpha-D-muramoyl-L-alanine + D-glutamate + ATP = UDP-N-acetyl-alpha-D-muramoyl-L-alanyl-D-glutamate + ADP + phosphate + H(+). It functions in the pathway cell wall biogenesis; peptidoglycan biosynthesis. Its function is as follows. Cell wall formation. Catalyzes the addition of glutamate to the nucleotide precursor UDP-N-acetylmuramoyl-L-alanine (UMA). The protein is UDP-N-acetylmuramoylalanine--D-glutamate ligase of Nitrobacter hamburgensis (strain DSM 10229 / NCIMB 13809 / X14).